We begin with the raw amino-acid sequence, 205 residues long: Ribosomal RNA small subunit methyltransferase G (205 aa).

S-adenosyl-L-methionine contacts are provided by residues Gly66, Phe71, 119–120 (IE), and Arg135.

The protein belongs to the methyltransferase superfamily. RNA methyltransferase RsmG family.

It is found in the cytoplasm. The catalysed reaction is guanosine(527) in 16S rRNA + S-adenosyl-L-methionine = N(7)-methylguanosine(527) in 16S rRNA + S-adenosyl-L-homocysteine. In terms of biological role, specifically methylates the N7 position of guanine in position 527 of 16S rRNA. The polypeptide is Ribosomal RNA small subunit methyltransferase G (Rhizobium johnstonii (strain DSM 114642 / LMG 32736 / 3841) (Rhizobium leguminosarum bv. viciae)).